The sequence spans 266 residues: Undecaprenyl-diphosphatase (266 aa).

A run of 8 helical transmembrane segments spans residues 1–21, 43–63, 81–101, 107–127, 145–165, 183–203, 219–239, and 245–265; these read MMSWLTIGVILGLVQGITEFL, ASVFEVAVQLGSIMAVVVIYW, LYGIWLLFLTTLPPGIIGFLF, TLFTIPSVIAALTTGSIFMLI, LTPKTALGIGFFECLALWPGF, HLAAEYSFIAAVPVMFAATGY, LFITGMICAFLAAWITIKVFI, and ISLRPFAYYRLLLAFIVYLCI.

This sequence belongs to the UppP family.

It localises to the cell membrane. It carries out the reaction di-trans,octa-cis-undecaprenyl diphosphate + H2O = di-trans,octa-cis-undecaprenyl phosphate + phosphate + H(+). Its function is as follows. Catalyzes the dephosphorylation of undecaprenyl diphosphate (UPP). Confers resistance to bacitracin. This is Undecaprenyl-diphosphatase from Lawsonia intracellularis (strain PHE/MN1-00).